A 1025-amino-acid chain; its full sequence is DNA ligase 4 (1025 aa).

A disordered region spans residues 1–36; the sequence is MMQPTPAPSSAPGSPQRTQAEPEMETPSYPQPPQNV. The ATP site is built by glutamate 289, lysine 291, leucine 292, arginine 296, glutamate 349, phenylalanine 387, glutamate 447, lysine 452, lysine 469, and lysine 471. Lysine 291 (N6-AMP-lysine intermediate) is an active-site residue. Position 349 (glutamate 349) interacts with Mg(2+). Glutamate 447 lines the Mg(2+) pocket. The region spanning 667–763 is the BRCT 1 domain; sequence VKTDIFNGMK…EPAPFKKKYF (97 aa). Residues 773 to 904 are disordered; sequence ADEYNEDDGE…TTPDVDGDVK (132 aa). Acidic residues-rich tracts occupy residues 775-785 and 806-816; these read EYNEDDGEEEG and SETEDEDEEQA. Over residues 817-838 the composition is skewed to basic and acidic residues; sequence PEIKEEQDGELHEWLKVDDRKS. Residues 845-870 are compositionally biased toward acidic residues; it reads DEEDSVTEDDSDNADVADEEEPDLDD. A compositionally biased stretch (basic and acidic residues) spans 891–904; that stretch reads RHRETTPDVDGDVK. One can recognise a BRCT 2 domain in the interval 915 to 1025; sequence DPDVIFKHLC…TLLDEEGESF (111 aa).

The protein belongs to the ATP-dependent DNA ligase family. Requires Mg(2+) as cofactor.

It is found in the nucleus. The enzyme catalyses ATP + (deoxyribonucleotide)n-3'-hydroxyl + 5'-phospho-(deoxyribonucleotide)m = (deoxyribonucleotide)n+m + AMP + diphosphate.. Functionally, DNA ligase involved in DNA non-homologous end joining (NHEJ); required for double-strand break (DSB) repair. The polypeptide is DNA ligase 4 (LIG4) (Coprinopsis cinerea (strain Okayama-7 / 130 / ATCC MYA-4618 / FGSC 9003) (Inky cap fungus)).